A 483-amino-acid polypeptide reads, in one-letter code: Alginate biosynthesis protein AlgA (483 aa).

The protein belongs to the mannose-6-phosphate isomerase type 2 family. Monomer. It depends on Co(2+) as a cofactor.

It carries out the reaction D-mannose 6-phosphate = D-fructose 6-phosphate. The enzyme catalyses alpha-D-mannose 1-phosphate + GTP + H(+) = GDP-alpha-D-mannose + diphosphate. It participates in nucleotide-sugar biosynthesis; GDP-alpha-D-mannose biosynthesis; GDP-alpha-D-mannose from alpha-D-mannose 1-phosphate (GTP route): step 1/1. The protein operates within nucleotide-sugar biosynthesis; GDP-alpha-D-mannose biosynthesis; alpha-D-mannose 1-phosphate from D-fructose 6-phosphate: step 1/2. Produces a precursor for alginate polymerization. The alginate layer provides a protective barrier against host immune defenses and antibiotics. This chain is Alginate biosynthesis protein AlgA (algA), found in Pseudomonas fluorescens.